A 215-amino-acid polypeptide reads, in one-letter code: uncharacterized protein (215 aa).

S-adenosyl-L-methionine contacts are provided by Gly53, Glu74, and Asp97.

It belongs to the methyltransferase superfamily. YrrT family.

In terms of biological role, could be a S-adenosyl-L-methionine-dependent methyltransferase. This is an uncharacterized protein from Geobacillus kaustophilus (strain HTA426).